The primary structure comprises 356 residues: Fe(3+) ions import ATP-binding protein FbpC 2 (356 aa).

An ABC transporter domain is found at 12-246 (LTVKNLNKFF…PNHLETAKFM (235 aa)). 44–51 (GSSGCGKT) lines the ATP pocket.

Belongs to the ABC transporter superfamily. Fe(3+) ion importer (TC 3.A.1.10) family. As to quaternary structure, the complex is composed of two ATP-binding proteins (FbpC), two transmembrane proteins (FbpB) and a solute-binding protein (FbpA).

The protein resides in the cell inner membrane. It carries out the reaction Fe(3+)(out) + ATP + H2O = Fe(3+)(in) + ADP + phosphate + H(+). In terms of biological role, part of the ABC transporter complex FbpABC involved in Fe(3+) ions import. Responsible for energy coupling to the transport system. In Haemophilus influenzae (strain ATCC 51907 / DSM 11121 / KW20 / Rd), this protein is Fe(3+) ions import ATP-binding protein FbpC 2.